The chain runs to 303 residues: Cathepsin B-like CP1 (303 aa).

Positions M1–A19 are cleaved as a signal peptide. N41 carries N-linked (GlcNAc...) asparagine glycosylation. 3 cysteine pairs are disulfide-bonded: C92–C119, C102–C145, and C138–C181. Residue C105 is part of the active site. Residues H249 and N270 contribute to the active site.

The protein belongs to the peptidase C1 family.

The protein localises to the vacuole. In terms of biological role, thiol protease which is required for parasite excystation and invasion of the proximal small intestine of the human host. The chain is Cathepsin B-like CP1 (CP1) from Giardia intestinalis (Giardia lamblia).